Consider the following 966-residue polypeptide: Insulin-degrading enzyme-like 2 (966 aa).

Histidine 71 contributes to the Zn(2+) binding site. The active-site Proton acceptor is glutamate 74. Histidine 75 serves as a coordination point for Zn(2+). Residue glutamate 145 is part of the active site. Glutamate 152 contributes to the Zn(2+) binding site.

It belongs to the peptidase M16 family. Requires Zn(2+) as cofactor.

This chain is Insulin-degrading enzyme-like 2, found in Arabidopsis thaliana (Mouse-ear cress).